Consider the following 350-residue polypeptide: C5a anaphylatoxin chemotactic receptor 1 (350 aa).

The Extracellular portion of the chain corresponds to 1–37 (MDDMCSILTEEELSLYNITDCEFVKPGGLGPVLGPRH). Asn17 carries N-linked (GlcNAc...) asparagine glycosylation. A helical transmembrane segment spans residues 38-64 (LSALVFYGLVFLLGVPGNALVVWVTGF). The Cytoplasmic portion of the chain corresponds to 65–69 (RMPRS). A helical transmembrane segment spans residues 70 to 93 (VTSLWFLNLALADLLCCLSLPLLM). Residues 94 to 110 (VPLAMDQHWPFGPVACK) lie on the Extracellular side of the membrane. Cys109 and Cys187 form a disulfide bridge. Residues 111-132 (LLKGLLYLIMFCSVLLLVLISL) form a helical membrane-spanning segment. The Cytoplasmic segment spans residues 133–154 (DRFLLVSWPVWCQNWRRPRKAG). The helical transmembrane segment at 155–174 (WVCVGVWLLALLGSIPQFVY) threads the bilayer. The Extracellular segment spans residues 175 to 197 (VKEVQLSTSKSECLGLYTVASAW). A helical transmembrane segment spans residues 198-223 (ANTTARFLVGFVLPFITIVTCHWVVY). The Cytoplasmic portion of the chain corresponds to 224–247 (SRARRGSGVGPGRVSEARSRRTLR). Residues 248 to 270 (VIVAVSLSFFLCWFPLHILDFLV) traverse the membrane as a helical segment. The Extracellular portion of the chain corresponds to 271–287 (LSTPRHSSHSANIQLAH). A helical membrane pass occupies residues 288–308 (TLALCLAYCNSCLNPLLYVCL). Topologically, residues 309–350 (GRGFKQNINRSLRNMFNFATEESVTRQSMFKSTSERTQEMNM) are cytoplasmic.

The protein belongs to the G-protein coupled receptor 1 family. In terms of tissue distribution, high expression in head, kidney and posterior kidney, lower levels in peripheral blood leukocytes and spleen, low expression in brain and gills, heart, intestine and very low expression in liver and muscle.

It is found in the cell membrane. Its function is as follows. Receptor for the chemotactic and inflammatory peptide anaphylatoxin C5a. This receptor stimulates chemotaxis, granule enzyme release and superoxide anion production. In Oncorhynchus mykiss (Rainbow trout), this protein is C5a anaphylatoxin chemotactic receptor 1 (c5ar1).